Consider the following 313-residue polypeptide: E3 ubiquitin-protein ligase RNF126 (313 aa).

An N-acetylalanine modification is found at Ala2. Ser5 is modified (phosphoserine). The segment at 5 to 100 (SPQPGRYFCH…FEIPTFPPGA (96 aa)) is required for interaction with BAG6. 4 residues coordinate Zn(2+): Cys13, Cys16, Cys29, and Cys32. A C4-type zinc finger spans residues 13-32 (CHCCSVEIVPRLPDYICPRC). 2 disordered regions span residues 42-63 (EETR…QNRQ) and 95-128 (TFPP…RQPR). A compositionally biased stretch (polar residues) spans 47–63 (TENGSAPSTAPTDQNRQ). Over residues 103-116 (DDGRDPESRREREH) the composition is skewed to basic and acidic residues. Residues 117–128 (QSRHRYGARQPR) are compositionally biased toward basic residues. The tract at residues 202–306 (TGPPPADKEK…SSSSSSSPSN (105 aa)) is sufficient for interaction with AICDA. The RING-type zinc finger occupies 231–272 (CPVCKEDYALGESVRQLPCNHLFHDSCIVPWLEQHDSCPVCR). The tract at residues 279–313 (NTATNPPGLTGVGFSSSSSSSSSSSPSNENATSNS) is disordered. The span at 293–313 (SSSSSSSSSSSPSNENATSNS) shows a compositional bias: low complexity.

As to quaternary structure, interacts with CCDC50, EGFR, FLT3 and SCAMP3. Interacts with BAG6 (via ubiquitin-like domain); required for BAG6-dependent ubiquitination of proteins mislocalized to the cytosol. Interacts with CDKN1A. Interacts with AICDA. Ubiquitinated. May undergo autoubiquitination. In terms of tissue distribution, detected in B-cells (at protein level).

The protein localises to the cytoplasm. It localises to the nucleus. It catalyses the reaction S-ubiquitinyl-[E2 ubiquitin-conjugating enzyme]-L-cysteine + [acceptor protein]-L-lysine = [E2 ubiquitin-conjugating enzyme]-L-cysteine + N(6)-ubiquitinyl-[acceptor protein]-L-lysine.. Its pathway is protein modification; protein ubiquitination. E3 ubiquitin-protein ligase that mediates ubiquitination oF target proteins. Depending on the associated E2 ligase, mediates 'Lys-27'-, 'Lys-29'-, 'Lys-48'- and/or 'Lys-63'-linked polyubiquitination of substrates. Part of a BAG6-dependent quality control process ensuring that proteins of the secretory pathway that are mislocalized to the cytosol are degraded by the proteasome. Probably acts by providing the ubiquitin ligase activity associated with the BAG6 complex and be responsible for ubiquitination of the hydrophobic mislocalized proteins and their targeting to the proteasome. May also play a role in the endosomal recycling of IGF2R, the cation-independent mannose-6-phosphate receptor. May play a role in the endosomal sorting and degradation of several membrane receptors including EGFR, FLT3, MET and CXCR4, by mediating their ubiquitination. By ubiquitinating CDKN1A/p21 and targeting it for degradation, may also promote cell proliferation. May monoubiquitinate AICDA. Acts as a regulator of DNA repair by mediating 'Lys-27'- and 'Lys-29'-linked polyubiquitination of MRE11, thereby promoting the exonuclease activity of MRE11. The sequence is that of E3 ubiquitin-protein ligase RNF126 from Mus musculus (Mouse).